The following is a 469-amino-acid chain: MSEDLSMKCGLEIHVQVDTNSKLFCQCPTNYKDVEPNTNICPVCIGHPGAKPMPPNKKAIDMAIMVAKMLGCEMVIDKDIYFQRKHYNYPDLPSGYQKTSVPIGEHGKFLGVGITEVHLEEDPGQYKPDLGTVDYNRSGTPLIEIVTDPDMKSPEEAREFLRQLLRLFRYIGNLRGEGTMRADTNISIKYNGIQGNRVEVKNVNSIRGVYKVLKYELIRQKNVLRRGGEIKLETRAFMESQMITKGMRSKETADDYRYIPDPDLQPIVLNNEWVEKVEAQMPETPMNKEKRFVEQYGIKEDDAKVLVSDLELADVFEKVVAELGNDKDGISLAVTWIRNELKRVLVYNKLEFFETNLRPEHMVELINSIKDKTISQKIGKTIIEQMVEHKGEKTPKELINEMGLTVIEDTSELEKACEEAIKNSEKAIEDYKSGNQRALNSVVGQVMKLTRGRAEPATVVEILKKKIDG.

Belongs to the GatB/GatE family. GatB subfamily. As to quaternary structure, heterotrimer of A, B and C subunits.

It carries out the reaction L-glutamyl-tRNA(Gln) + L-glutamine + ATP + H2O = L-glutaminyl-tRNA(Gln) + L-glutamate + ADP + phosphate + H(+). It catalyses the reaction L-aspartyl-tRNA(Asn) + L-glutamine + ATP + H2O = L-asparaginyl-tRNA(Asn) + L-glutamate + ADP + phosphate + 2 H(+). Functionally, allows the formation of correctly charged Asn-tRNA(Asn) or Gln-tRNA(Gln) through the transamidation of misacylated Asp-tRNA(Asn) or Glu-tRNA(Gln) in organisms which lack either or both of asparaginyl-tRNA or glutaminyl-tRNA synthetases. The reaction takes place in the presence of glutamine and ATP through an activated phospho-Asp-tRNA(Asn) or phospho-Glu-tRNA(Gln). In Methanococcus maripaludis (strain C5 / ATCC BAA-1333), this protein is Aspartyl/glutamyl-tRNA(Asn/Gln) amidotransferase subunit B.